A 202-amino-acid polypeptide reads, in one-letter code: NAD(P)H-quinone oxidoreductase chain 6 (202 aa).

A run of 5 helical transmembrane segments spans residues 9–29, 32–52, 61–81, 98–118, and 144–164; these read VVSF…VVLA, IVYS…MYLL, AQVL…IMLV, VLTA…VLAT, and FLLP…GAII.

The protein belongs to the complex I subunit 6 family.

It is found in the membrane. The enzyme catalyses a plastoquinone + NADH + (n+1) H(+)(in) = a plastoquinol + NAD(+) + n H(+)(out). It carries out the reaction a plastoquinone + NADPH + (n+1) H(+)(in) = a plastoquinol + NADP(+) + n H(+)(out). Its function is as follows. NDH-1 shuttles electrons from NAD(P)H, via FMN and iron-sulfur (Fe-S) centers, to quinones in the respiratory chain. The immediate electron acceptor for the enzyme in this species is believed to be plastoquinone. Couples the redox reaction to proton translocation (for every two electrons transferred, four hydrogen ions are translocated across the cytoplasmic membrane), and thus conserves the redox energy in a proton gradient. In Nostoc sp. (strain PCC 7120 / SAG 25.82 / UTEX 2576), this protein is NAD(P)H-quinone oxidoreductase chain 6 (ndhG).